Consider the following 713-residue polypeptide: Glutamine-dependent NAD(+) synthetase (713 aa).

A CN hydrolase domain is found at 4-275 (VTLATCNLNQ…IEVITATVDL (272 aa)). The active-site Proton acceptor; for glutaminase activity is glutamate 44. Lysine 114 acts as the For glutaminase activity in catalysis. Cysteine 175 (nucleophile; for glutaminase activity) is an active-site residue. The segment at 324–703 (YNTPAEEIGF…QRPQLKNTVN (380 aa)) is ligase. 354 to 361 (PLSGGADS) provides a ligand contact to ATP. Serine 356 is a catalytic residue.

This sequence in the C-terminal section; belongs to the NAD synthetase family.

The catalysed reaction is deamido-NAD(+) + L-glutamine + ATP + H2O = L-glutamate + AMP + diphosphate + NAD(+) + H(+). Its pathway is cofactor biosynthesis; NAD(+) biosynthesis; NAD(+) from deamido-NAD(+) (L-Gln route): step 1/1. This Dictyostelium discoideum (Social amoeba) protein is Glutamine-dependent NAD(+) synthetase (nadsyn1).